The sequence spans 118 residues: Large ribosomal subunit protein bL20 (118 aa).

The protein belongs to the bacterial ribosomal protein bL20 family.

Functionally, binds directly to 23S ribosomal RNA and is necessary for the in vitro assembly process of the 50S ribosomal subunit. It is not involved in the protein synthesizing functions of that subunit. This is Large ribosomal subunit protein bL20 from Thermotoga neapolitana (strain ATCC 49049 / DSM 4359 / NBRC 107923 / NS-E).